The chain runs to 1633 residues: D-lysergyl-peptide-synthetase subunit 3 (1633 aa).

The adenylation (A) domain stretch occupies residues 80 to 483 (FRQRCDLHPD…GRKDSQIKIR (404 aa)). Residues 622–691 (EEHRLQRMYS…RLKDLARKAS (70 aa)) enclose the Carrier domain. Ser654 is subject to O-(pantetheine 4'-phosphoryl)serine. The condensation (C) domain stretch occupies residues 836–1127 (PLVRMKLVEG…ILGQIHGKEA (292 aa)). Positions 1256–1483 (VTGASGFIGT…EYNSSAGSEW (228 aa)) are reductase (R) domain.

This sequence belongs to the NRP synthetase family.

The protein operates within alkaloid biosynthesis; ergot alkaloid biosynthesis. In terms of biological role, D-lysergyl-peptide-synthetase subunit 3; part of the gene cluster that mediates the biosynthesis of fungal ergot alkaloid. DmaW catalyzes the first step of ergot alkaloid biosynthesis by condensing dimethylallyl diphosphate (DMAP) and tryptophan to form 4-dimethylallyl-L-tryptophan. The second step is catalyzed by the methyltransferase easF that methylates 4-dimethylallyl-L-tryptophan in the presence of S-adenosyl-L-methionine, resulting in the formation of 4-dimethylallyl-L-abrine. The catalase easC and the FAD-dependent oxidoreductase easE then transform 4-dimethylallyl-L-abrine to chanoclavine-I which is further oxidized by easD in the presence of NAD(+), resulting in the formation of chanoclavine-I aldehyde. Agroclavine dehydrogenase easG then mediates the conversion of chanoclavine-I aldehyde to agroclavine via a non-enzymatic adduct reaction: the substrate is an iminium intermediate that is formed spontaneously from chanoclavine-I aldehyde in the presence of glutathione. The presence of easA is not required to complete this reaction. Further conversion of agroclavine to paspalic acid is a two-step process involving oxidation of agroclavine to elymoclavine and of elymoclavine to paspalic acid, the second step being performed by the elymoclavine oxidase cloA. Paspalic acid is then further converted to D-lysergic acid. Ergopeptines are assembled from D-lysergic acid and three different amino acids by the D-lysergyl-peptide-synthetases composed each of a monomudular and a trimodular nonribosomal peptide synthetase subunit. LpsB and lpsC encode the monomodular subunits responsible for D-lysergic acid activation and incorporation into the ergopeptine backbone. LpsA1 and A2 subunits encode the trimodular nonribosomal peptide synthetase assembling the tripeptide portion of ergopeptines. LpsA1 is responsible for formation of the major ergopeptine, ergotamine, and lpsA2 for alpha-ergocryptine, the minor ergopeptine of the total alkaloid mixture elaborated by C.purpurea. D-lysergyl-tripeptides are assembled by the nonribosomal peptide synthetases and released as N-(D-lysergyl-aminoacyl)-lactams. Cyclolization of the D-lysergyl-tripeptides is performed by the Fe(2+)/2-ketoglutarate-dependent dioxygenase easH which introduces a hydroxyl group into N-(D-lysergyl-aminoacyl)-lactam at alpha-C of the aminoacyl residue followed by spontaneous condensation with the terminal lactam carbonyl group. This chain is D-lysergyl-peptide-synthetase subunit 3, found in Claviceps purpurea (Ergot fungus).